The following is a 677-amino-acid chain: Methionine--tRNA ligase (677 aa).

Residues 15–25 (PYANGSIHLGH) carry the 'HIGH' region motif. Cysteine 146, cysteine 149, cysteine 159, and cysteine 162 together coordinate Zn(2+). Residues 333–337 (KMSKS) carry the 'KMSKS' region motif. Residue lysine 336 coordinates ATP. One can recognise a tRNA-binding domain in the interval 575 to 677 (DFAKVDLRVA…AGAKPGHQVK (103 aa)).

Belongs to the class-I aminoacyl-tRNA synthetase family. MetG type 1 subfamily. As to quaternary structure, homodimer. Zn(2+) serves as cofactor.

It is found in the cytoplasm. The catalysed reaction is tRNA(Met) + L-methionine + ATP = L-methionyl-tRNA(Met) + AMP + diphosphate. Functionally, is required not only for elongation of protein synthesis but also for the initiation of all mRNA translation through initiator tRNA(fMet) aminoacylation. This chain is Methionine--tRNA ligase, found in Shigella flexneri serotype 5b (strain 8401).